Here is a 435-residue protein sequence, read N- to C-terminus: Citrate synthase (435 aa).

Residues His311 and Asp370 contribute to the active site.

This sequence belongs to the citrate synthase family. Homohexamer.

The enzyme catalyses oxaloacetate + acetyl-CoA + H2O = citrate + CoA + H(+). It participates in carbohydrate metabolism; tricarboxylic acid cycle; isocitrate from oxaloacetate: step 1/2. The sequence is that of Citrate synthase (gltA) from Rickettsia africae (strain ESF-5).